The chain runs to 274 residues: Ribosomal RNA small subunit methyltransferase A (274 aa).

S-adenosyl-L-methionine contacts are provided by Asn-28, Leu-30, Gly-55, Glu-77, Asp-103, and Asn-122.

This sequence belongs to the class I-like SAM-binding methyltransferase superfamily. rRNA adenine N(6)-methyltransferase family. RsmA subfamily.

It localises to the cytoplasm. The enzyme catalyses adenosine(1518)/adenosine(1519) in 16S rRNA + 4 S-adenosyl-L-methionine = N(6)-dimethyladenosine(1518)/N(6)-dimethyladenosine(1519) in 16S rRNA + 4 S-adenosyl-L-homocysteine + 4 H(+). In terms of biological role, specifically dimethylates two adjacent adenosines (A1518 and A1519) in the loop of a conserved hairpin near the 3'-end of 16S rRNA in the 30S particle. May play a critical role in biogenesis of 30S subunits. This chain is Ribosomal RNA small subunit methyltransferase A, found in Rhizobium meliloti (strain 1021) (Ensifer meliloti).